Reading from the N-terminus, the 748-residue chain is Polyribonucleotide nucleotidyltransferase (748 aa).

Mg(2+) contacts are provided by Asp487 and Asp493. The KH domain maps to Pro554 to Ile613. One can recognise an S1 motif domain in the interval Gly623 to Lys691. Residues Ala693–Asn733 form a disordered region. Residues Ser699–Lys712 are compositionally biased toward polar residues. The segment covering Asp713 to Asp722 has biased composition (basic and acidic residues).

The protein belongs to the polyribonucleotide nucleotidyltransferase family. Mg(2+) is required as a cofactor.

The protein resides in the cytoplasm. The catalysed reaction is RNA(n+1) + phosphate = RNA(n) + a ribonucleoside 5'-diphosphate. Its function is as follows. Involved in mRNA degradation. Catalyzes the phosphorolysis of single-stranded polyribonucleotides processively in the 3'- to 5'-direction. This Rickettsia peacockii (strain Rustic) protein is Polyribonucleotide nucleotidyltransferase.